We begin with the raw amino-acid sequence, 117 residues long: Large ribosomal subunit protein uL18 (117 aa).

The protein belongs to the universal ribosomal protein uL18 family. Part of the 50S ribosomal subunit; part of the 5S rRNA/L5/L18/L25 subcomplex. Contacts the 5S and 23S rRNAs.

This is one of the proteins that bind and probably mediate the attachment of the 5S RNA into the large ribosomal subunit, where it forms part of the central protuberance. This chain is Large ribosomal subunit protein uL18, found in Enterobacter sp. (strain 638).